We begin with the raw amino-acid sequence, 103 residues long: Small ribosomal subunit protein uS10 (103 aa).

It belongs to the universal ribosomal protein uS10 family. Part of the 30S ribosomal subunit.

Its function is as follows. Involved in the binding of tRNA to the ribosomes. This is Small ribosomal subunit protein uS10 from Laribacter hongkongensis (strain HLHK9).